Consider the following 345-residue polypeptide: Phosphate acyltransferase (345 aa).

The protein belongs to the PlsX family. In terms of assembly, homodimer. Probably interacts with PlsY.

It localises to the cytoplasm. It catalyses the reaction a fatty acyl-[ACP] + phosphate = an acyl phosphate + holo-[ACP]. It functions in the pathway lipid metabolism; phospholipid metabolism. In terms of biological role, catalyzes the reversible formation of acyl-phosphate (acyl-PO(4)) from acyl-[acyl-carrier-protein] (acyl-ACP). This enzyme utilizes acyl-ACP as fatty acyl donor, but not acyl-CoA. The polypeptide is Phosphate acyltransferase (Limosilactobacillus fermentum (strain NBRC 3956 / LMG 18251) (Lactobacillus fermentum)).